Reading from the N-terminus, the 250-residue chain is Small ribosomal subunit protein uS3 (250 aa).

The KH type-2 domain occupies 39 to 111 (IRTLIKNNYP…KVQINIFEVK (73 aa)).

Belongs to the universal ribosomal protein uS3 family. As to quaternary structure, part of the 30S ribosomal subunit. Forms a tight complex with proteins S10 and S14.

In terms of biological role, binds the lower part of the 30S subunit head. Binds mRNA in the 70S ribosome, positioning it for translation. This chain is Small ribosomal subunit protein uS3, found in Alder yellows phytoplasma.